We begin with the raw amino-acid sequence, 408 residues long: Two-pore potassium channel 5 (408 aa).

2 disordered regions span residues 1–29 and 58–82; these read MEPL…SASI and QSVQ…SQTR. Residues 15 to 29 show a composition bias toward low complexity; it reads PIPENPSSSSSSASI. The Stromal portion of the chain corresponds to 22–115; that stretch reads SSSSSASITI…TKKPSPVSKS (94 aa). Acidic residues predominate over residues 63–72; the sequence is DKEDQDSDSD. A helical transmembrane segment spans residues 116–136; sequence IIRQAIFLLIVYLTLGVSIYS. Positions 152–171 form an intramembrane region, pore-forming; sequence DALYFCIVTMCTIGYGDIAP. The chain crosses the membrane as a helical span at residues 178-198; it reads IFAVVFVLFGFGFLDILLSGV. Residues 199–248 are Stromal-facing; that stretch reads VNYVLDLQESMILTGIQTRQHHQHHHHHRFSAKDYIIDFEKGRMRIRMKV. Residues 249–269 traverse the membrane as a helical segment; the sequence is CLALCVVVLCIGVGALVLHFV. The pore-forming intramembrane region spans 276 to 295; that stretch reads DSVYLSVMSVTTVGYGDRAF. Residues 302-322 form a helical membrane-spanning segment; the sequence is LFAAVWLLVSTLAVARAFLYL. At 323–408 the chain is on the stromal side; that stretch reads AEARIDRRHR…TLPDLLGDPL (86 aa). 2 EF-hand domains span residues 339–374 and 378–408; these read LNRE…EMGK and KDID…GDPL. Residues Asp352, Glu363, Asp391, Asn393, Lys397, and Asp402 each contribute to the Ca(2+) site.

Belongs to the two pore domain potassium channel (TC 1.A.1.7) family. Homodimer. Expressed in hydathodes and the vascular tissues of roots, stems, leaves and flowers.

It localises to the vacuole membrane. Functionally, probable voltage-independent potassium-selective tonoplast ion channel. This Arabidopsis thaliana (Mouse-ear cress) protein is Two-pore potassium channel 5 (TPK5).